Consider the following 336-residue polypeptide: Mitochondrial thiamine pyrophosphate carrier 1 (336 aa).

Solcar repeat units follow at residues 11–98 (ISST…VNQV), 112–202 (SSGA…VKDS), and 221–323 (TKGW…SLSI). 6 helical membrane-spanning segments follow: residues 17–37 (MLCGGIAGMVSRFCIAPLDVV), 66–86 (GVTALWKGNIPAELLYVFYGA), 118–138 (FIAGATAGAGATIATYPFDLF), 177–197 (GVSSSIISIAPYMGLFFASYG), 228–244 (TAGLCAGTASKALVFPL), and 298–315 (GFLVSLIKSAPTSAITMY).

This sequence belongs to the mitochondrial carrier (TC 2.A.29) family.

The protein resides in the mitochondrion inner membrane. In terms of biological role, mitochondrial transporter that mediates uptake of thiamine pyrophosphate (ThPP) into mitochondria. The sequence is that of Mitochondrial thiamine pyrophosphate carrier 1 (TPC1) from Yarrowia lipolytica (strain CLIB 122 / E 150) (Yeast).